The primary structure comprises 400 residues: Probable tRNA pseudouridine synthase D (400 aa).

Asp-89 acts as the Nucleophile in catalysis. The TRUD domain occupies Gly-162–Leu-357.

This sequence belongs to the pseudouridine synthase TruD family.

It carries out the reaction uridine(13) in tRNA = pseudouridine(13) in tRNA. Its function is as follows. Could be responsible for synthesis of pseudouridine from uracil-13 in transfer RNAs. The chain is Probable tRNA pseudouridine synthase D from Methanopyrus kandleri (strain AV19 / DSM 6324 / JCM 9639 / NBRC 100938).